A 232-amino-acid polypeptide reads, in one-letter code: Orotidine 5'-phosphate decarboxylase (232 aa).

Residues aspartate 16, lysine 38, 65-74 (DLKLHDIGNT), threonine 119, arginine 180, glutamine 189, glycine 209, and arginine 210 contribute to the substrate site. Lysine 67 acts as the Proton donor in catalysis.

This sequence belongs to the OMP decarboxylase family. Type 1 subfamily. In terms of assembly, homodimer.

The enzyme catalyses orotidine 5'-phosphate + H(+) = UMP + CO2. It functions in the pathway pyrimidine metabolism; UMP biosynthesis via de novo pathway; UMP from orotate: step 2/2. Its function is as follows. Catalyzes the decarboxylation of orotidine 5'-monophosphate (OMP) to uridine 5'-monophosphate (UMP). The chain is Orotidine 5'-phosphate decarboxylase from Methylorubrum populi (strain ATCC BAA-705 / NCIMB 13946 / BJ001) (Methylobacterium populi).